The primary structure comprises 435 residues: Glutamyl-tRNA reductase (435 aa).

Substrate-binding positions include 49–52 (TCNR), Ser109, 114–116 (ETQ), and Gln120. Cys50 (nucleophile) is an active-site residue. 189-194 (GAGEMS) is an NADP(+) binding site.

It belongs to the glutamyl-tRNA reductase family. As to quaternary structure, homodimer.

It carries out the reaction (S)-4-amino-5-oxopentanoate + tRNA(Glu) + NADP(+) = L-glutamyl-tRNA(Glu) + NADPH + H(+). It participates in porphyrin-containing compound metabolism; protoporphyrin-IX biosynthesis; 5-aminolevulinate from L-glutamyl-tRNA(Glu): step 1/2. Functionally, catalyzes the NADPH-dependent reduction of glutamyl-tRNA(Glu) to glutamate 1-semialdehyde (GSA). This Listeria monocytogenes serotype 4b (strain F2365) protein is Glutamyl-tRNA reductase.